Reading from the N-terminus, the 948-residue chain is MDSWLEYDDIINQDIDIPSNDLSGSGTLCVGVHSSLLENSLNSIDSFISSKEEISWCGNQSTPIATKSHLSCINPQYVNPFDTSPVSVDTEFQDTYLLDAPSFAQPHFSERQSVDKTRSRCLSRNRRRKRHPNLHKNHQRLLGMSFPQDGFRRMPAESVNFSYFRDTGFNEPTIFPSSDTQNTRQLNLSKIATLIGYDCPLALVDVVTQKQIPNKMDMESWVKYMSLEPSKRGRIYDVLSLEVSTTKLAYYVRKPNIVRDLDLVNTVWPPGSFALGEYPHVDTYCLMSAENSYTEFHIEFGGSSAYYNILDGCKIFYLIPGTSKNWEAYTAWLTSSNDSDKKFLPNMVDVCYCVEVHSQQTILVPSGWIYAVVTPCDTISIAGNFLTFLHIYPQLSIYNLELQLGIEKEYQYPYFESIMWYTAIHFYLAFPDNSSRDGIDDIIAEYETGRLFDINAFTEQELDGFEELLNYLYIRAQILRDCDIIIDIYNEPVKISKNNGYNSAYTMVPPDLDEICVDFVQKFGAWITYHHRRSAKHPSCNCFSHLQTKLIDSGPKPANNSYQHQSNFIGVVISTNHNIIKKCQESQIQTGKNNCSFQLVKKRIKSTKKAPSWRSIIKAFKKRENTRCNFLSSLHATTFREDIVVRPKIKSFVLEQLIFQALFSFAINWTPSFFLNHSNFENIALSKETFNFGGEANCENTDTTLFTTWGDQGFRPSDSICYNDFNLLETANSDAEASIHELELQPLNAVNEREVDISQTDMTPSTALDTRVDTRVDSLPEFSNLILSPSSNDDSFQLDDLLSPSSSNLKQQIQKVVPQNSLEFSVGEKEKKAAEYSLLHTFSYKRLSMENEKPDTTKVPLKYNIQHEEMKAYRRKNDLEYIDQHFASSKSGISNGRNNNKEVNLTKAENVGIKKRRIMKNENNIYDFEDHSPVREKWGHRLRSRGAS.

The 160-residue stretch at 243 to 402 folds into the JmjC domain; that stretch reads VSTTKLAYYV…PQLSIYNLEL (160 aa). Threonine 294 lines the substrate pocket. Fe cation contacts are provided by histidine 297 and glutamate 299. Lysine 314 contacts substrate.

This sequence belongs to the JHDM1 histone demethylase family. Fe(2+) serves as cofactor.

It is found in the nucleus. The enzyme catalyses N(6),N(6)-dimethyl-L-lysyl(36)-[histone H3] + 2 2-oxoglutarate + 2 O2 = L-lysyl(36)-[histone H3] + 2 formaldehyde + 2 succinate + 2 CO2. May be a histone demethylase that specifically demethylates 'Lys-36' of histone H3, thereby playing a central role in histone code. Represses transcriptional silencing by negatively affecting heterochromatin stability. In Schizosaccharomyces pombe (strain 972 / ATCC 24843) (Fission yeast), this protein is Putative JmjC domain-containing histone demethylation protein 1 (jhd1).